We begin with the raw amino-acid sequence, 135 residues long: Large ribosomal subunit protein uL15 (135 aa).

Positions 21–66 (VGRGQGSGMGKTATRGGKGQTARTGYKAKRGFEGGQQPLQRRLPKI) are disordered.

This sequence belongs to the universal ribosomal protein uL15 family. In terms of assembly, part of the 50S ribosomal subunit.

Functionally, binds to the 23S rRNA. In Helicobacter pylori (strain HPAG1), this protein is Large ribosomal subunit protein uL15.